A 436-amino-acid chain; its full sequence is Enolase (436 aa).

Position 167 (Gln-167) interacts with (2R)-2-phosphoglycerate. Residue Glu-209 is the Proton donor of the active site. Positions 246, 291, and 318 each coordinate Mg(2+). (2R)-2-phosphoglycerate contacts are provided by Lys-343, Arg-372, Ser-373, and Lys-394. Lys-343 functions as the Proton acceptor in the catalytic mechanism.

This sequence belongs to the enolase family. As to quaternary structure, component of the RNA degradosome, a multiprotein complex involved in RNA processing and mRNA degradation. Mg(2+) serves as cofactor.

Its subcellular location is the cytoplasm. It localises to the secreted. It is found in the cell surface. The catalysed reaction is (2R)-2-phosphoglycerate = phosphoenolpyruvate + H2O. It functions in the pathway carbohydrate degradation; glycolysis; pyruvate from D-glyceraldehyde 3-phosphate: step 4/5. Catalyzes the reversible conversion of 2-phosphoglycerate (2-PG) into phosphoenolpyruvate (PEP). It is essential for the degradation of carbohydrates via glycolysis. The sequence is that of Enolase from Haemophilus influenzae (strain ATCC 51907 / DSM 11121 / KW20 / Rd).